The chain runs to 142 residues: uncharacterized protein (142 aa).

This is an uncharacterized protein from Saccharomyces cerevisiae (strain ATCC 204508 / S288c) (Baker's yeast).